The chain runs to 92 residues: Small ribosomal subunit protein uS19 (92 aa).

The protein belongs to the universal ribosomal protein uS19 family.

Functionally, protein S19 forms a complex with S13 that binds strongly to the 16S ribosomal RNA. The protein is Small ribosomal subunit protein uS19 of Bifidobacterium adolescentis (strain ATCC 15703 / DSM 20083 / NCTC 11814 / E194a).